A 165-amino-acid polypeptide reads, in one-letter code: Protein NKG7 (165 aa).

The next 4 helical transmembrane spans lie at 9–29 (LFAG…DFWI), 61–81 (FCIL…LSCI), 92–112 (LVST…MAVY), and 133–153 (FYLG…SLGA).

Belongs to the PMP-22/EMP/MP20 family. In terms of tissue distribution, predominantly expressed by leukocytes with cytotoxic activity such as CD8(+) T-cells and natural killer cells.

The protein localises to the cell membrane. Its subcellular location is the cytolytic granule membrane. Its function is as follows. Regulates cytotoxic granule exocytosis in effector lymphocytes, thus acting as a critical mediator of inflammation in a broad range of infectious and non-infectious diseases. Essential for cytotoxic degranulation of natural killer (NK) cells and CD8(+) T-cells and for the activation of CD4(+) T-cells following infection. Plays a critical role in CD8(+) T-cell and NK cell-mediated cytolysis of target cells and contributes to the cytolytic activity via the perforin/granzyme pathway by enhancing exocytosis of LAMP1-carrying lytic granules. Contributes to NK cell-mediated control of cancer metastasis. This Mus musculus (Mouse) protein is Protein NKG7 (Nkg7).